Consider the following 270-residue polypeptide: 4-hydroxy-tetrahydrodipicolinate reductase (270 aa).

Residues 11-16 and E37 contribute to the NAD(+) site; that span reads GAGGRM. R38 contacts NADP(+). NAD(+)-binding positions include 101–103 and 125–128; these read GTT and APNM. Residue H158 is the Proton donor/acceptor of the active site. (S)-2,3,4,5-tetrahydrodipicolinate is bound at residue H159. The Proton donor role is filled by K162. 168-169 is a binding site for (S)-2,3,4,5-tetrahydrodipicolinate; it reads GT.

Belongs to the DapB family.

Its subcellular location is the cytoplasm. The enzyme catalyses (S)-2,3,4,5-tetrahydrodipicolinate + NAD(+) + H2O = (2S,4S)-4-hydroxy-2,3,4,5-tetrahydrodipicolinate + NADH + H(+). The catalysed reaction is (S)-2,3,4,5-tetrahydrodipicolinate + NADP(+) + H2O = (2S,4S)-4-hydroxy-2,3,4,5-tetrahydrodipicolinate + NADPH + H(+). Its pathway is amino-acid biosynthesis; L-lysine biosynthesis via DAP pathway; (S)-tetrahydrodipicolinate from L-aspartate: step 4/4. Functionally, catalyzes the conversion of 4-hydroxy-tetrahydrodipicolinate (HTPA) to tetrahydrodipicolinate. The sequence is that of 4-hydroxy-tetrahydrodipicolinate reductase from Shewanella sp. (strain ANA-3).